Here is a 354-residue protein sequence, read N- to C-terminus: Uroporphyrinogen decarboxylase (354 aa).

Residues 27–31 (RQAGR), D77, Y154, T209, and H327 each bind substrate.

The protein belongs to the uroporphyrinogen decarboxylase family. Homodimer.

It localises to the cytoplasm. The enzyme catalyses uroporphyrinogen III + 4 H(+) = coproporphyrinogen III + 4 CO2. Its pathway is porphyrin-containing compound metabolism; protoporphyrin-IX biosynthesis; coproporphyrinogen-III from 5-aminolevulinate: step 4/4. Its function is as follows. Catalyzes the decarboxylation of four acetate groups of uroporphyrinogen-III to yield coproporphyrinogen-III. This Shigella dysenteriae serotype 1 (strain Sd197) protein is Uroporphyrinogen decarboxylase.